Consider the following 310-residue polypeptide: Isoaspartyl peptidase/L-asparaginase (310 aa).

T167 (nucleophile) is an active-site residue. Substrate is bound by residues 195–198 and 218–221; these read RVGD and TGHG.

Belongs to the Ntn-hydrolase family. In terms of assembly, heterodimer of an alpha and beta chain produced by autocleavage. In terms of processing, cleaved into an alpha and beta chain by autocatalysis; this activates the enzyme. The N-terminal residue of the beta subunit is responsible for the nucleophile hydrolase activity.

The protein resides in the cytoplasm. The enzyme catalyses L-asparagine + H2O = L-aspartate + NH4(+). The catalysed reaction is Cleavage of a beta-linked Asp residue from the N-terminus of a polypeptide.. Has both L-asparaginase and beta-aspartyl peptidase activity. Does not have aspartylglucosaminidase activity and is inactive toward GlcNAc-L-Asn. Likewise, has no activity toward glutamine. This is Isoaspartyl peptidase/L-asparaginase (asrgl1) from Danio rerio (Zebrafish).